The following is a 1598-amino-acid chain: Pentafunctional AROM polypeptide (1598 aa).

Positions 1–384 (MGVPTKISIL…YEPRASTVSN (384 aa)) are 3-dehydroquinate synthase. NAD(+)-binding positions include 44–46 (DTN), 81–84 (ESSK), 114–116 (GGV), and Asp-119. 7-phospho-2-dehydro-3-deoxy-D-arabino-heptonate is bound at residue Arg-130. 139–140 (TT) is a binding site for NAD(+). Asp-146 and Lys-152 together coordinate 7-phospho-2-dehydro-3-deoxy-D-arabino-heptonate. Position 161 (Lys-161) interacts with NAD(+). Position 162 (Asn-162) interacts with 7-phospho-2-dehydro-3-deoxy-D-arabino-heptonate. NAD(+)-binding positions include 179 to 182 (FLNT) and Asn-190. Zn(2+) is bound at residue Glu-194. Residues 194 to 197 (EVIK) and Lys-250 each bind 7-phospho-2-dehydro-3-deoxy-D-arabino-heptonate. Residue Glu-260 is the Proton acceptor; for 3-dehydroquinate synthase activity of the active site. Residues 264–268 (RNLLN) and His-271 each bind 7-phospho-2-dehydro-3-deoxy-D-arabino-heptonate. Zn(2+) is bound at residue His-271. His-275 functions as the Proton acceptor; for 3-dehydroquinate synthase activity in the catalytic mechanism. 2 residues coordinate 7-phospho-2-dehydro-3-deoxy-D-arabino-heptonate: His-287 and Lys-356. His-287 provides a ligand contact to Zn(2+). Residues 397–842 (VYPGFPKSLN…WNTLAQTFKV (446 aa)) form an EPSP synthase region. Catalysis depends on Cys-824, which acts as the For EPSP synthase activity. Residues 867-1059 (AASIFIIGMR…RRKENTFFVS (193 aa)) form a shikimate kinase region. 874 to 881 (GMRGAGKT) contacts ATP. The segment at 1060 to 1280 (LTFPDLTPAS…AAPGQLSARE (221 aa)) is 3-dehydroquinase. Catalysis depends on His-1183, which acts as the Proton acceptor; for 3-dehydroquinate dehydratase activity. Lys-1211 serves as the catalytic Schiff-base intermediate with substrate; for 3-dehydroquinate dehydratase activity. The shikimate dehydrogenase stretch occupies residues 1293–1598 (AKKFAVIGKP…GVSSSDDTIS (306 aa)).

In the N-terminal section; belongs to the sugar phosphate cyclases superfamily. Dehydroquinate synthase family. The protein in the 2nd section; belongs to the EPSP synthase family. This sequence in the 3rd section; belongs to the shikimate kinase family. It in the 4th section; belongs to the type-I 3-dehydroquinase family. In the C-terminal section; belongs to the shikimate dehydrogenase family. Homodimer. Requires Zn(2+) as cofactor.

It localises to the cytoplasm. It catalyses the reaction 7-phospho-2-dehydro-3-deoxy-D-arabino-heptonate = 3-dehydroquinate + phosphate. The enzyme catalyses 3-dehydroquinate = 3-dehydroshikimate + H2O. It carries out the reaction shikimate + NADP(+) = 3-dehydroshikimate + NADPH + H(+). The catalysed reaction is shikimate + ATP = 3-phosphoshikimate + ADP + H(+). It catalyses the reaction 3-phosphoshikimate + phosphoenolpyruvate = 5-O-(1-carboxyvinyl)-3-phosphoshikimate + phosphate. Its pathway is metabolic intermediate biosynthesis; chorismate biosynthesis; chorismate from D-erythrose 4-phosphate and phosphoenolpyruvate: step 2/7. The protein operates within metabolic intermediate biosynthesis; chorismate biosynthesis; chorismate from D-erythrose 4-phosphate and phosphoenolpyruvate: step 3/7. It functions in the pathway metabolic intermediate biosynthesis; chorismate biosynthesis; chorismate from D-erythrose 4-phosphate and phosphoenolpyruvate: step 4/7. It participates in metabolic intermediate biosynthesis; chorismate biosynthesis; chorismate from D-erythrose 4-phosphate and phosphoenolpyruvate: step 5/7. Its pathway is metabolic intermediate biosynthesis; chorismate biosynthesis; chorismate from D-erythrose 4-phosphate and phosphoenolpyruvate: step 6/7. The AROM polypeptide catalyzes 5 consecutive enzymatic reactions in prechorismate polyaromatic amino acid biosynthesis. This Paracoccidioides brasiliensis (strain Pb18) protein is Pentafunctional AROM polypeptide.